Here is a 665-residue protein sequence, read N- to C-terminus: Mitochondrial Rho GTPase 1 (665 aa).

The Cytoplasmic portion of the chain corresponds to 1 to 634; sequence MTNDVIRIVV…NQDPEEETNT (634 aa). Residues 3–177 enclose the Miro 1 domain; that stretch reads NDVIRIVVCG…FYLCQKAVMH (175 aa). GTP-binding positions include 12–19, 61–67, and 119–122; these read GDEGVGKS, DTQFSNS, and NVFD. EF-hand domains are found at residues 193-228 and 313-348; these read NAVA…CFGR and EGYR…TPGI. Ca(2+)-binding residues include D206, D208, D210, Y212, E217, D326, D328, D330, and E337. Positions 452–618 constitute a Miro 2 domain; sequence RSVFNCFVLG…FIQLAEAAQQ (167 aa). Residues 461–468, 498–502, and 567–570 contribute to the GTP site; these read GSHMSGKT, EMTGG, and LKAD. Residues 635 to 655 traverse the membrane as a helical; Anchor for type IV membrane protein segment; sequence IMPFALAGGATVLLAAAVAWI. Topologically, residues 656-665 are mitochondrial intermembrane; the sequence is FKNVRVAGRE.

The protein belongs to the mitochondrial Rho GTPase family.

Its subcellular location is the mitochondrion outer membrane. Its function is as follows. Mitochondrial GTPase involved in mitochondrial trafficking. Probably involved in control of anterograde transport of mitochondria and their subcellular distribution. This Yarrowia lipolytica (strain CLIB 122 / E 150) (Yeast) protein is Mitochondrial Rho GTPase 1 (GEM1).